The sequence spans 173 residues: MDIAIQQPWFKRALGPFYPSRLFDQFFGEGLFEYDLMPFLSSTISPYYRQSLFRTVLDSGVSEVRSDRDKFVIFLDVKHFSPEDLTVKVLQDFVEIHGKHNERQDDHGYISREFHRRYRLPSNVDQSALSCSLSADGMLTFSGPKVPSGVDAGHSERAIPVSREEKPSSAPSS.

Methionine 1 bears the N-acetylmethionine mark. Residues 1–63 are required for complex formation with BFSP1 and BFSP2; it reads MDIAIQQPWF…RTVLDSGVSE (63 aa). Deamidated glutamine; partial is present on glutamine 6. Serine 45 carries the phosphoserine modification. Glutamine 50 bears the Deamidated glutamine; partial mark. The region spanning 52 to 162 is the sHSP domain; it reads LFRTVLDSGV…GHSERAIPVS (111 aa). N6-acetyllysine occurs at positions 70 and 99. Histidine 100 provides a ligand contact to Zn(2+). At asparagine 101 the chain carries Deamidated asparagine; partial. Residues glutamate 102 and histidine 107 each contribute to the Zn(2+) site. Serine 122 is subject to Phosphoserine. Asparagine 123 bears the Deamidated asparagine; partial mark. Positions 144–173 are disordered; it reads PKVPSGVDAGHSERAIPVSREEKPSSAPSS. The segment covering 153 to 167 has biased composition (basic and acidic residues); sequence GHSERAIPVSREEKP. Residue histidine 154 coordinates Zn(2+). A glycan (O-linked (GlcNAc) serine) is linked at serine 162.

It belongs to the small heat shock protein (HSP20) family. As to quaternary structure, heteromer composed of three CRYAA and one CRYAB subunits. Inter-subunit bridging via zinc ions enhances stability, which is crucial as there is no protein turn over in the lens. Can also form homodimers and homotetramers (dimers of dimers) which serve as the building blocks of homooligomers. Within homooligomers, the zinc-binding motif is created from residues of 3 different molecules. His-100 and Glu-102 from one molecule are ligands of the zinc ion, and His-107 and His-154 residues from additional molecules complete the site with tetrahedral coordination geometry. Part of a complex required for lens intermediate filament formation composed of BFSP1, BFSP2 and CRYAA. Acetylation at Lys-70 may increase chaperone activity. In terms of processing, undergoes age-dependent proteolytical cleavage at the C-terminus.

The protein resides in the cytoplasm. It localises to the nucleus. Its function is as follows. Contributes to the transparency and refractive index of the lens. Acts as a chaperone, preventing aggregation of various proteins under a wide range of stress conditions. Required for the correct formation of lens intermediate filaments as part of a complex composed of BFSP1, BFSP2 and CRYAA. This is Alpha-crystallin A chain (CRYAA) from Neovison vison (American mink).